Reading from the N-terminus, the 886-residue chain is Alanine--tRNA ligase (886 aa).

His-564, His-568, Cys-666, and His-670 together coordinate Zn(2+).

Belongs to the class-II aminoacyl-tRNA synthetase family. Zn(2+) serves as cofactor.

The protein resides in the cytoplasm. The catalysed reaction is tRNA(Ala) + L-alanine + ATP = L-alanyl-tRNA(Ala) + AMP + diphosphate. Functionally, catalyzes the attachment of alanine to tRNA(Ala) in a two-step reaction: alanine is first activated by ATP to form Ala-AMP and then transferred to the acceptor end of tRNA(Ala). Also edits incorrectly charged Ser-tRNA(Ala) and Gly-tRNA(Ala) via its editing domain. The protein is Alanine--tRNA ligase of Prochlorococcus marinus (strain MIT 9312).